An 89-amino-acid chain; its full sequence is Small ribosomal subunit protein uS14 (89 aa).

The Zn(2+) site is built by C52, C55, C68, and C71.

Belongs to the universal ribosomal protein uS14 family. Part of the 30S ribosomal subunit. Contacts proteins S3 and S10. It depends on Zn(2+) as a cofactor.

Its function is as follows. Binds 16S rRNA, required for the assembly of 30S particles and may also be responsible for determining the conformation of the 16S rRNA at the A site. In Salinibacter ruber (strain DSM 13855 / M31), this protein is Small ribosomal subunit protein uS14 (rpsN).